The chain runs to 192 residues: Probable GTP-binding protein EngB (192 aa).

Residues 22-192 enclose the EngB-type G domain; that stretch reads QIPEIVFAGR…LLAHLAQYIR (171 aa). GTP-binding positions include 30 to 37, 57 to 61, 75 to 78, 142 to 145, and 172 to 174; these read GRSNVGKS, GKTRL, DLPG, TKDD, and YSS. Mg(2+) is bound by residues S37 and T59.

The protein belongs to the TRAFAC class TrmE-Era-EngA-EngB-Septin-like GTPase superfamily. EngB GTPase family. Mg(2+) is required as a cofactor.

Necessary for normal cell division and for the maintenance of normal septation. In Chlorobium phaeobacteroides (strain DSM 266 / SMG 266 / 2430), this protein is Probable GTP-binding protein EngB.